Consider the following 274-residue polypeptide: 4-diphosphocytidyl-2-C-methyl-D-erythritol kinase (274 aa).

Lys-8 is a catalytic residue. 94–104 contributes to the ATP binding site; it reads PSGAGLGGGSS. The active site involves Asp-136.

It belongs to the GHMP kinase family. IspE subfamily.

The catalysed reaction is 4-CDP-2-C-methyl-D-erythritol + ATP = 4-CDP-2-C-methyl-D-erythritol 2-phosphate + ADP + H(+). The protein operates within isoprenoid biosynthesis; isopentenyl diphosphate biosynthesis via DXP pathway; isopentenyl diphosphate from 1-deoxy-D-xylulose 5-phosphate: step 3/6. Its function is as follows. Catalyzes the phosphorylation of the position 2 hydroxy group of 4-diphosphocytidyl-2C-methyl-D-erythritol. The polypeptide is 4-diphosphocytidyl-2-C-methyl-D-erythritol kinase (Bacteroides thetaiotaomicron (strain ATCC 29148 / DSM 2079 / JCM 5827 / CCUG 10774 / NCTC 10582 / VPI-5482 / E50)).